A 568-amino-acid polypeptide reads, in one-letter code: Sulfite reductase [NADPH] hemoprotein beta-component (568 aa).

Residues C426, C432, C471, and C475 each contribute to the [4Fe-4S] cluster site. Position 475 (C475) interacts with siroheme.

This sequence belongs to the nitrite and sulfite reductase 4Fe-4S domain family. Alpha(8)-beta(8). The alpha component is a flavoprotein, the beta component is a hemoprotein. It depends on siroheme as a cofactor. [4Fe-4S] cluster is required as a cofactor.

It carries out the reaction hydrogen sulfide + 3 NADP(+) + 3 H2O = sulfite + 3 NADPH + 4 H(+). Its pathway is sulfur metabolism; hydrogen sulfide biosynthesis; hydrogen sulfide from sulfite (NADPH route): step 1/1. Component of the sulfite reductase complex that catalyzes the 6-electron reduction of sulfite to sulfide. This is one of several activities required for the biosynthesis of L-cysteine from sulfate. The sequence is that of Sulfite reductase [NADPH] hemoprotein beta-component from Xylella fastidiosa (strain 9a5c).